Reading from the N-terminus, the 150-residue chain is Protein E6 (150 aa).

Zinc fingers lie at residues 31–67 (CVFC…CACC) and 104–140 (CYLC…CLHC).

Belongs to the papillomaviridae E6 protein family. As to quaternary structure, forms homodimers. Interacts with ubiquitin-protein ligase UBE3A/E6-AP; this interaction stimulates UBE3A ubiquitin activity. Interacts with host TP53 and EP300; this interaction inhibits TP53 activity. Interacts with human zyxin.

Its subcellular location is the host cytoplasm. It is found in the host nucleus. Its function is as follows. Plays a major role in the induction and maintenance of cellular transformation. E6 associates with host UBE3A/E6-AP ubiquitin-protein ligase and modulates its activity. Sequesters tumor suppressor TP53 in the host cytoplasm and modulates its activity by interacting with host EP300 that results in the reduction of TP53 acetylation and activation. In turn, apoptosis induced by DNA damage is inhibited. E6 also protects host keratinocytes from apoptosis by mediating the degradation of host BAK1. May also inhibit host immune response. The sequence is that of Protein E6 from Human papillomavirus type 6b.